Here is a 708-residue protein sequence, read N- to C-terminus: MNEVIQTTVAGRTLKVDCEKVGMLSNCGMLISYGDTVVLINANASDKPREGIDFFPLSIEYEERLYSVGKIPGGFIKREGKPSEKAILNARAIDRPLRPLFPKGYRNDVQVVCTVLSVDQDNLPNIVAMNGASLALCISSIPFITPVGSVAVGLVDGNFIINPNLEDREKSTLNLTVCATKERVMMVEAGACEVPEDIMYDAIIFGFEECKKIALFQEEVMKKYGKKKDEPDLYKVNEDLEEEVRGFAFDMIKDAMYIVDRDERNKVLKDIDEKLEEQFSEDYADNKSDIADVVYRVKKEIVRGMLLKEHRRVDGREFDEVRPISCEVGFLPRAHGTGLFTRGLTQVMTVVTLGSLGDVQILDGVGLEDSKRYMHHYNFPSYSTGEVRPLRGPGRREIGHGALAEKALEPLIPMEEQFPYTIRLVSEVLSSNGSTSQASICGSTLALLDAGVPIKRPAAGIAMGLVTSEDLSQEEILTDIQGLEDFFGDMDFKVGGTEKGITAIQFDTKIHGLSNKCIKETLEKARTARLYILEKMKQCIPEHRAEVSKYAPKTYIMSIPPDKIRDVIGSGGKVINKIIAETGVKIDIKEDGKIFVMSEDSEGAKKALKIIDDLTREILVGEIYLGKVTKITNFGAFVEIHKGKEGLVHISKLDFTRVNKVEDIVSVGDEILVKVIEIDNQGRINLSRKDAIKDSEKKEQNEKDVQKK.

The Mg(2+) site is built by D485 and D491. A KH domain is found at 552-611; that stretch reads PKTYIMSIPPDKIRDVIGSGGKVINKIIAETGVKIDIKEDGKIFVMSEDSEGAKKALKII. The 69-residue stretch at 621 to 689 folds into the S1 motif domain; the sequence is GEIYLGKVTK…NQGRINLSRK (69 aa). Residues 689 to 708 are disordered; that stretch reads KDAIKDSEKKEQNEKDVQKK.

The protein belongs to the polyribonucleotide nucleotidyltransferase family. The cofactor is Mg(2+).

It localises to the cytoplasm. It carries out the reaction RNA(n+1) + phosphate = RNA(n) + a ribonucleoside 5'-diphosphate. Functionally, involved in mRNA degradation. Catalyzes the phosphorolysis of single-stranded polyribonucleotides processively in the 3'- to 5'-direction. The sequence is that of Polyribonucleotide nucleotidyltransferase from Clostridium kluyveri (strain NBRC 12016).